The primary structure comprises 608 residues: Albumin (608 aa).

The first 18 residues, 1–18, serve as a signal peptide directing secretion; sequence MKWVTFISLLFLFSSAYS. A propeptide spanning residues 19–24 is cleaved from the precursor; sequence RGVFRR. Albumin domains are found at residues 19–210, 211–403, and 404–601; these read RGVF…DALE, GKSL…EFQP, and LVDE…KLVE. Position 27 (H27) interacts with Cu cation. Phosphoserine is present on S29. 2 residues coordinate Ca(2+): E30 and D37. The cysteines at positions 77 and 86 are disulfide-linked. Residues S82 and S89 each carry the phosphoserine modification. H91 provides a ligand contact to Zn(2+). 6 disulfide bridges follow: C99/C115, C114/C125, C148/C193, C192/C201, C224/C270, and C269/C277. T107 is modified (phosphothreonine). K229 carries the N6-succinyllysine modification. E268 is a Ca(2+) binding site. Zn(2+)-binding residues include H271 and D273. Ca(2+)-binding residues include D273, E276, D279, and D283. Cystine bridges form between C289-C303, C302-C313, C340-C385, C384-C393, C416-C462, C461-C472, C485-C501, and C500-C511. S297 is modified (phosphoserine). S443 is modified (phosphoserine). A phosphothreonine mark is found at T444 and T446. Residue K460 is modified to N6-succinyllysine. Position 513 is a phosphoserine (S513). 2 cysteine pairs are disulfide-bonded: C538–C583 and C582–C591. An N6-methyllysine modification is found at K558. T570 carries the phosphothreonine modification. The residue at position 588 (K588) is an N6-succinyllysine.

It belongs to the ALB/AFP/VDB family. Interacts with FCGRT; this interaction regulates ALB homeostasis. Interacts with TASOR. In plasma, occurs in a covalently-linked complex with chromophore-bound alpha-1-microglobulin; this interaction does not prevent fatty acid binding to ALB. Post-translationally, phosphorylated by FAM20C in the extracellular medium. Plasma.

The protein resides in the secreted. Its function is as follows. Binds water, Ca(2+), Na(+), K(+), fatty acids, hormones, bilirubin and drugs. Its main function is the regulation of the colloidal osmotic pressure of blood. Major zinc transporter in plasma, typically binds about 80% of all plasma zinc. Major calcium and magnesium transporter in plasma, binds approximately 45% of circulating calcium and magnesium in plasma. Potentially has more than two calcium-binding sites and might additionally bind calcium in a non-specific manner. The shared binding site between zinc and calcium at residue Asp-273 suggests a crosstalk between zinc and calcium transport in the blood. The rank order of affinity is zinc &gt; calcium &gt; magnesium. Binds to the bacterial siderophore enterobactin and inhibits enterobactin-mediated iron uptake of E.coli from ferric transferrin, and may thereby limit the utilization of iron and growth of enteric bacteria such as E.coli. Does not prevent iron uptake by the bacterial siderophore aerobactin. The sequence is that of Albumin (ALB) from Oryctolagus cuniculus (Rabbit).